A 486-amino-acid polypeptide reads, in one-letter code: Siroheme synthase (486 aa).

The interval 1–204 (MNYLPIFVDL…HQIEQAEALV (204 aa)) is precorrin-2 dehydrogenase /sirohydrochlorin ferrochelatase. NAD(+)-binding positions include 22 to 23 (HI) and 43 to 44 (EK). Phosphoserine is present on Ser-128. The uroporphyrinogen-III C-methyltransferase stretch occupies residues 216–486 (GEVSLVGAGP…NKETHWKQAA (271 aa)). Pro-225 provides a ligand contact to S-adenosyl-L-methionine. Residue Asp-248 is the Proton acceptor of the active site. Lys-270 (proton donor) is an active-site residue. S-adenosyl-L-methionine-binding positions include 301 to 303 (GGD), Val-306, 331 to 332 (TA), Met-383, and Gly-412.

The protein in the N-terminal section; belongs to the precorrin-2 dehydrogenase / sirohydrochlorin ferrochelatase family. In the C-terminal section; belongs to the precorrin methyltransferase family.

It catalyses the reaction uroporphyrinogen III + 2 S-adenosyl-L-methionine = precorrin-2 + 2 S-adenosyl-L-homocysteine + H(+). The catalysed reaction is precorrin-2 + NAD(+) = sirohydrochlorin + NADH + 2 H(+). It carries out the reaction siroheme + 2 H(+) = sirohydrochlorin + Fe(2+). It functions in the pathway cofactor biosynthesis; adenosylcobalamin biosynthesis; precorrin-2 from uroporphyrinogen III: step 1/1. It participates in cofactor biosynthesis; adenosylcobalamin biosynthesis; sirohydrochlorin from precorrin-2: step 1/1. Its pathway is porphyrin-containing compound metabolism; siroheme biosynthesis; precorrin-2 from uroporphyrinogen III: step 1/1. The protein operates within porphyrin-containing compound metabolism; siroheme biosynthesis; siroheme from sirohydrochlorin: step 1/1. It functions in the pathway porphyrin-containing compound metabolism; siroheme biosynthesis; sirohydrochlorin from precorrin-2: step 1/1. Multifunctional enzyme that catalyzes the SAM-dependent methylations of uroporphyrinogen III at position C-2 and C-7 to form precorrin-2 via precorrin-1. Then it catalyzes the NAD-dependent ring dehydrogenation of precorrin-2 to yield sirohydrochlorin. Finally, it catalyzes the ferrochelation of sirohydrochlorin to yield siroheme. This chain is Siroheme synthase, found in Actinobacillus pleuropneumoniae serotype 3 (strain JL03).